Here is a 163-residue protein sequence, read N- to C-terminus: Nucleotide-binding protein Dde_2479 (163 aa).

The protein belongs to the YajQ family.

Its function is as follows. Nucleotide-binding protein. This Oleidesulfovibrio alaskensis (strain ATCC BAA-1058 / DSM 17464 / G20) (Desulfovibrio alaskensis) protein is Nucleotide-binding protein Dde_2479.